Here is a 438-residue protein sequence, read N- to C-terminus: ATP-dependent RNA helicase RhlB (438 aa).

Positions 9–37 match the Q motif motif; sequence HKFADFGLQPQVIDGLEKKGFVYCTPIQA. The Helicase ATP-binding domain occupies 40 to 219; it reads LPVLLSGQDI…FEHMNNPEHV (180 aa). Position 53–60 (53–60) interacts with ATP; the sequence is AQTGTGKT. Positions 165–168 match the DEAD box motif; it reads DEAD. Residues 245-390 enclose the Helicase C-terminal domain; that stretch reads ALLQTLIEEE…TSDYDPSALL (146 aa). A disordered region spans residues 394-438; that stretch reads PAPLSLRSSPQQRRTNTAGSRNSNNGGNRKPQQRRPRAPRPKKEA. A compositionally biased stretch (low complexity) spans 406–423; sequence RRTNTAGSRNSNNGGNRK. A compositionally biased stretch (basic residues) spans 424–438; the sequence is PQQRRPRAPRPKKEA.

It belongs to the DEAD box helicase family. RhlB subfamily. Component of the RNA degradosome, which is a multiprotein complex involved in RNA processing and mRNA degradation.

It is found in the cytoplasm. The catalysed reaction is ATP + H2O = ADP + phosphate + H(+). Its function is as follows. DEAD-box RNA helicase involved in RNA degradation. Has RNA-dependent ATPase activity and unwinds double-stranded RNA. In Vibrio cholerae serotype O1 (strain ATCC 39541 / Classical Ogawa 395 / O395), this protein is ATP-dependent RNA helicase RhlB.